The following is a 344-amino-acid chain: Glyceraldehyde-3-phosphate dehydrogenase (344 aa).

NAD(+)-binding positions include 11–12 (TI) and G110. 139 to 141 (SCN) provides a ligand contact to D-glyceraldehyde 3-phosphate. C140 functions as the Nucleophile in the catalytic mechanism. R169 serves as a coordination point for NAD(+). 195–196 (HG) lines the D-glyceraldehyde 3-phosphate pocket. Position 302 (Q302) interacts with NAD(+).

The protein belongs to the glyceraldehyde-3-phosphate dehydrogenase family. In terms of assembly, homotetramer.

The protein localises to the cytoplasm. It carries out the reaction D-glyceraldehyde 3-phosphate + phosphate + NADP(+) = (2R)-3-phospho-glyceroyl phosphate + NADPH + H(+). The enzyme catalyses D-glyceraldehyde 3-phosphate + phosphate + NAD(+) = (2R)-3-phospho-glyceroyl phosphate + NADH + H(+). Its pathway is carbohydrate degradation; glycolysis; pyruvate from D-glyceraldehyde 3-phosphate: step 1/5. The sequence is that of Glyceraldehyde-3-phosphate dehydrogenase from Pyrobaculum arsenaticum (strain DSM 13514 / JCM 11321 / PZ6).